The primary structure comprises 155 residues: Small ribosomal subunit protein uS7 (155 aa).

Belongs to the universal ribosomal protein uS7 family. In terms of assembly, part of the 30S ribosomal subunit. Contacts proteins S9 and S11.

In terms of biological role, one of the primary rRNA binding proteins, it binds directly to 16S rRNA where it nucleates assembly of the head domain of the 30S subunit. Is located at the subunit interface close to the decoding center, probably blocks exit of the E-site tRNA. The polypeptide is Small ribosomal subunit protein uS7 (Xylella fastidiosa (strain M12)).